A 122-amino-acid chain; its full sequence is Large ribosomal subunit protein uL14c (122 aa).

It belongs to the universal ribosomal protein uL14 family. As to quaternary structure, part of the 50S ribosomal subunit.

Its subcellular location is the plastid. Its function is as follows. Binds to 23S rRNA. The protein is Large ribosomal subunit protein uL14c of Cuscuta gronovii (Common dodder).